The sequence spans 329 residues: Cytosolic arginine sensor for mTORC1 subunit 2 (329 aa).

ACT domains are found at residues 72 to 139 and 262 to 322; these read ADAT…MHTL and ELWK…NALQ.

Belongs to the GATS family. May form homodimers and heterodimers.

It localises to the cytoplasm. It is found in the cytosol. In terms of biological role, functions as a negative regulator of the TORC1 signaling pathway. In Xenopus tropicalis (Western clawed frog), this protein is Cytosolic arginine sensor for mTORC1 subunit 2.